The chain runs to 771 residues: 5-methyltetrahydropteroyltriglutamate--homocysteine methyltransferase (771 aa).

Residues arginine 13–lysine 16 and lysine 128 contribute to the 5-methyltetrahydropteroyltri-L-glutamate site. L-homocysteine contacts are provided by residues isoleucine 451–serine 453 and glutamate 504. Residues isoleucine 451–serine 453 and glutamate 504 contribute to the L-methionine site. 5-methyltetrahydropteroyltri-L-glutamate contacts are provided by residues arginine 535 to cysteine 536 and tryptophan 581. Aspartate 619 contacts L-homocysteine. Aspartate 619 is an L-methionine binding site. A 5-methyltetrahydropteroyltri-L-glutamate-binding site is contributed by glutamate 625. Zn(2+) is bound by residues histidine 661, cysteine 663, and glutamate 685. Histidine 714 functions as the Proton donor in the catalytic mechanism. Cysteine 746 contributes to the Zn(2+) binding site.

This sequence belongs to the vitamin-B12 independent methionine synthase family. Zn(2+) serves as cofactor.

The catalysed reaction is 5-methyltetrahydropteroyltri-L-glutamate + L-homocysteine = tetrahydropteroyltri-L-glutamate + L-methionine. The protein operates within amino-acid biosynthesis; L-methionine biosynthesis via de novo pathway; L-methionine from L-homocysteine (MetE route): step 1/1. In terms of biological role, catalyzes the transfer of a methyl group from 5-methyltetrahydrofolate to homocysteine resulting in methionine formation. The polypeptide is 5-methyltetrahydropteroyltriglutamate--homocysteine methyltransferase (Nitrobacter winogradskyi (strain ATCC 25391 / DSM 10237 / CIP 104748 / NCIMB 11846 / Nb-255)).